The primary structure comprises 139 residues: Translation initiation factor 5A (139 aa).

A Hypusine modification is found at Lys-36.

This sequence belongs to the eIF-5A family.

It localises to the cytoplasm. Its function is as follows. Functions by promoting the formation of the first peptide bond. The polypeptide is Translation initiation factor 5A (eif5a) (Aeropyrum pernix (strain ATCC 700893 / DSM 11879 / JCM 9820 / NBRC 100138 / K1)).